A 438-amino-acid chain; its full sequence is uncharacterized protein (438 aa).

His59 contacts Zn(2+). Catalysis depends on Glu62, which acts as the Proton acceptor. Zn(2+) contacts are provided by His63 and Glu139.

It belongs to the peptidase M16 family. Requires Zn(2+) as cofactor.

This is an uncharacterized protein from Mycobacterium tuberculosis (strain CDC 1551 / Oshkosh).